The following is a 484-amino-acid chain: Arginyl-tRNA--protein transferase 1 (484 aa).

Belongs to the R-transferase family.

The enzyme catalyses an N-terminal L-alpha-aminoacyl-[protein] + L-arginyl-tRNA(Arg) = an N-terminal L-arginyl-L-aminoacyl-[protein] + tRNA(Arg) + H(+). Its function is as follows. Involved in the post-translational conjugation of arginine to the N-terminal aspartate or glutamate of a protein. This arginylation is required for degradation of the protein via the ubiquitin pathway. Does not arginylate cysteine residues. This is Arginyl-tRNA--protein transferase 1 (Ate1) from Drosophila melanogaster (Fruit fly).